The following is a 209-amino-acid chain: Ribosomal RNA large subunit methyltransferase E (209 aa).

Positions 63, 65, 83, 99, and 124 each coordinate S-adenosyl-L-methionine. K164 (proton acceptor) is an active-site residue.

The protein belongs to the class I-like SAM-binding methyltransferase superfamily. RNA methyltransferase RlmE family.

It is found in the cytoplasm. It carries out the reaction uridine(2552) in 23S rRNA + S-adenosyl-L-methionine = 2'-O-methyluridine(2552) in 23S rRNA + S-adenosyl-L-homocysteine + H(+). Its function is as follows. Specifically methylates the uridine in position 2552 of 23S rRNA at the 2'-O position of the ribose in the fully assembled 50S ribosomal subunit. The sequence is that of Ribosomal RNA large subunit methyltransferase E from Aliivibrio salmonicida (strain LFI1238) (Vibrio salmonicida (strain LFI1238)).